Consider the following 101-residue polypeptide: Replication restart protein PriB (101 aa).

Residues 1-101 (MTTNNLVLAG…LHAENVELKT (101 aa)) form the SSB domain.

This sequence belongs to the PriB family. Homodimer. Interacts with PriA and DnaT. Component of the replication restart primosome. Primosome assembly occurs via a 'hand-off' mechanism. PriA binds to replication forks, subsequently PriB then DnaT bind; DnaT then displaces ssDNA to generate the helicase loading substrate.

Its function is as follows. Involved in the restart of stalled replication forks, which reloads the replicative helicase on sites other than the origin of replication; the PriA-PriB pathway is the major replication restart pathway. During primosome assembly it facilitates complex formation between PriA and DnaT on DNA; stabilizes PriA on DNA. Stimulates the DNA unwinding activity of PriA helicase. The sequence is that of Replication restart protein PriB from Shewanella pealeana (strain ATCC 700345 / ANG-SQ1).